The sequence spans 336 residues: Dihydroorotate dehydrogenase (quinone) (336 aa).

Residues 62–66 (AGMDK) and Thr86 contribute to the FMN site. Lys66 is a binding site for substrate. 111-115 (NRMGF) serves as a coordination point for substrate. Residues Asn139 and Asn172 each coordinate FMN. Asn172 serves as a coordination point for substrate. The active-site Nucleophile is Ser175. Residue Asn177 coordinates substrate. Residues Lys217 and Thr245 each coordinate FMN. 246–247 (NT) is a substrate binding site. FMN is bound by residues Gly268, Gly297, and 318-319 (YS).

This sequence belongs to the dihydroorotate dehydrogenase family. Type 2 subfamily. Monomer. FMN is required as a cofactor.

It is found in the cell membrane. It catalyses the reaction (S)-dihydroorotate + a quinone = orotate + a quinol. The protein operates within pyrimidine metabolism; UMP biosynthesis via de novo pathway; orotate from (S)-dihydroorotate (quinone route): step 1/1. Its function is as follows. Catalyzes the conversion of dihydroorotate to orotate with quinone as electron acceptor. This chain is Dihydroorotate dehydrogenase (quinone), found in Buchnera aphidicola subsp. Schizaphis graminum (strain Sg).